We begin with the raw amino-acid sequence, 412 residues long: 43 kDa receptor-associated protein of the synapse (412 aa).

The N-myristoyl glycine moiety is linked to residue Gly-2. TPR repeat units follow at residues 6 to 39 (TKQQ…SADP), 83 to 116 (TEGY…QGTT), 123 to 156 (GQVS…AHNN), 163 to 196 (CRVC…VNDY), 206 to 239 (AMSQ…ALQH), 246 to 279 (ALCL…MTEI), and 286 to 319 (IQVL…AEGL). Phosphotyrosine is present on Tyr-196. Residues 363-403 (CGMCGESIGEKNNQLQALPCSHFFHLKCLQTNGTRGCPNCR) form an RING-type zinc finger.

Belongs to the RAPsyn family. In terms of tissue distribution, expressed in muscle fibers and in neurons.

The protein resides in the cell membrane. It localises to the postsynaptic cell membrane. It is found in the cytoplasm. Its subcellular location is the cytoskeleton. In terms of biological role, postsynaptic protein required for clustering of nicotinic acetylcholine receptors (nAChRs) at the neuromuscular junction. It may link the receptor to the underlying postsynaptic cytoskeleton, possibly by direct association with actin or spectrin. The protein is 43 kDa receptor-associated protein of the synapse (RAPSN) of Gallus gallus (Chicken).